The primary structure comprises 295 residues: HTH-type transcriptional regulator ShiR (295 aa).

Residues 1–58 enclose the HTH lysR-type domain; that stretch reads MEIRWLEGFIAVAEELHFSNAAIRLGMPQSPLSQLIRRLESELGQKLFDRSTRSVELT. The H-T-H motif DNA-binding region spans 18–37; sequence FSNAAIRLGMPQSPLSQLIR.

Belongs to the LysR transcriptional regulatory family.

Its function is as follows. Activates expression of the shikimate transporter ShiA in the presence of shikimate. Binds to the shiA promoter region. The sequence is that of HTH-type transcriptional regulator ShiR from Corynebacterium glutamicum (strain R).